An 885-amino-acid chain; its full sequence is DNA mismatch repair protein MutS (885 aa).

The disordered stretch occupies residues 1 to 67 (MAPGEQQLSL…SNNDDEGLPR (67 aa)). A compositionally biased stretch (basic and acidic residues) spans 26-36 (SEDKTEESERP). 691 to 698 (GPNASGKS) is an ATP binding site.

Belongs to the DNA mismatch repair MutS family.

In terms of biological role, this protein is involved in the repair of mismatches in DNA. It is possible that it carries out the mismatch recognition step. This protein has a weak ATPase activity. This chain is DNA mismatch repair protein MutS, found in Synechococcus sp. (strain RCC307).